The following is a 285-amino-acid chain: Polyamine aminopropyltransferase (285 aa).

A PABS domain is found at 5 to 241 (DSWFTEHFQA…GWWSVTLSSK (237 aa)). Residue glutamine 35 coordinates S-methyl-5'-thioadenosine. Spermidine is bound by residues histidine 66 and aspartate 90. Residues aspartate 110 and 141–142 (DG) contribute to the S-methyl-5'-thioadenosine site. The active-site Proton acceptor is the aspartate 160. Position 160–163 (160–163 (DSTD)) interacts with spermidine. S-methyl-5'-thioadenosine is bound at residue proline 167.

It belongs to the spermidine/spermine synthase family. Homodimer or homotetramer.

Its subcellular location is the cytoplasm. It catalyses the reaction S-adenosyl 3-(methylsulfanyl)propylamine + putrescine = S-methyl-5'-thioadenosine + spermidine + H(+). It functions in the pathway amine and polyamine biosynthesis; spermidine biosynthesis; spermidine from putrescine: step 1/1. Functionally, catalyzes the irreversible transfer of a propylamine group from the amino donor S-adenosylmethioninamine (decarboxy-AdoMet) to putrescine (1,4-diaminobutane) to yield spermidine. The sequence is that of Polyamine aminopropyltransferase from Xylella fastidiosa (strain 9a5c).